Reading from the N-terminus, the 372-residue chain is MPHKAPKSKLFRTRYVEDSDDETRGRSRNRSVEKSRSKSLTRSKSKSPKKSRSKSLDRSKNVKTTKSKNTNKSNKYTEEDSEDSEDSESDQDDDKSDNEQSDSELDDSESDDDETDDNESDNDKSKDNFENIIESKENDFRNIIFENINEKFAIGKFGDFEVIINRDNGYINATQLCKDCGKDYKNWNQNEKSREFVKKLSQYTGLSNTNLLTKIIGGNNVKLRGTYVHPIILTNIGNWISPTFAIKIGEWIEEWKKFSRKNTLKYYKELSKIELYSNNDKEKQIQLALQKSLGGKIEVRTKHGYVDLLTKDKIIEIKSYDNWKHALGQILAYGELYENKNKCIYLFDIPSKNEIANIKIILKKFGISLLCI.

Residues 1-12 (MPHKAPKSKLFR) show a composition bias toward basic residues. The tract at residues 1 to 129 (MPHKAPKSKL…SDNDKSKDNF (129 aa)) is disordered. The span at 14 to 36 (RYVEDSDDETRGRSRNRSVEKSR) shows a compositional bias: basic and acidic residues. The segment covering 37 to 53 (SKSLTRSKSKSPKKSRS) has biased composition (basic residues). Residues 79–120 (EDSEDSEDSESDQDDDKSDNEQSDSELDDSESDDDETDDNES) show a composition bias toward acidic residues. In terms of domain architecture, KilA-N spans 151–255 (KFAIGKFGDF…IKIGEWIEEW (105 aa)).

This Acanthamoeba polyphaga (Amoeba) protein is Putative KilA-N domain-containing protein L32.